A 463-amino-acid chain; its full sequence is Phosphomannomutase/phosphoglucomutase (463 aa).

Serine 108 functions as the Phosphoserine intermediate in the catalytic mechanism. Residues serine 108, aspartate 242, aspartate 244, and aspartate 246 each coordinate Mg(2+). Substrate contacts are provided by glutamate 325, serine 327, and histidine 329.

It belongs to the phosphohexose mutase family. Monomer. Requires Mg(2+) as cofactor.

It catalyses the reaction alpha-D-mannose 1-phosphate = D-mannose 6-phosphate. It carries out the reaction alpha-D-glucose 1-phosphate = alpha-D-glucose 6-phosphate. It participates in nucleotide-sugar biosynthesis; GDP-alpha-D-mannose biosynthesis; alpha-D-mannose 1-phosphate from D-fructose 6-phosphate: step 2/2. Its pathway is bacterial outer membrane biogenesis; lipopolysaccharide biosynthesis. The phosphomannomutase activity produces a precursor for alginate polymerization. The alginate layer causes a mucoid phenotype and provides a protective barrier against host immune defenses and antibiotics. Also involved in core-LPS biosynthesis due to its phosphoglucomutase activity. Essential for biofilm production. This is Phosphomannomutase/phosphoglucomutase (algC) from Pseudomonas putida (strain ATCC 47054 / DSM 6125 / CFBP 8728 / NCIMB 11950 / KT2440).